A 329-amino-acid chain; its full sequence is Cytosolic sulfotransferase 6 (329 aa).

A 3'-phosphoadenylyl sulfate-binding site is contributed by 74–79 (KCGTTW). Residue histidine 140 is the Proton acceptor of the active site. Residues arginine 162, serine 170, and 295 to 297 (RKG) each bind 3'-phosphoadenylyl sulfate.

The protein belongs to the sulfotransferase 1 family.

The protein localises to the cytoplasm. Sulfotransferase that utilizes 3'-phospho-5'-adenylyl sulfate (PAPS) as sulfonate donor. This chain is Cytosolic sulfotransferase 6 (SOT6), found in Arabidopsis thaliana (Mouse-ear cress).